A 271-amino-acid chain; its full sequence is Murein DD-endopeptidase MepH (271 aa).

Residues 1 to 27 form the signal peptide; it reads MARINRISITLCALLFTTLPLTPMAHA. The tract at residues 27–102 is disordered; it reads ASKQARESSA…KHAVNKTASA (76 aa). Basic residues predominate over residues 55–64; the sequence is KTQKTAKKAA. Low complexity predominate over residues 65 to 86; it reads SKSTTKSKTASSVKKSSITASK. The NlpC/P60 domain maps to 138–265; sequence QKATKVAMNK…RHYVGARRVM (128 aa). The active-site Nucleophile is the Cys-169. His-224 serves as the catalytic Proton acceptor. Gln-236 is an active-site residue.

It belongs to the peptidase C40 family.

Its pathway is cell wall biogenesis; cell wall polysaccharide biosynthesis. Functionally, a murein DD-endopeptidase with specificity for D-Ala-meso-diaminopimelic acid (mDAP) cross-links. Its role is probably to cleave D-Ala-mDAP cross-links to allow insertion of new glycans and thus cell wall expansion. Functionally redundant with MepM and MepH. Partially suppresses an mepS disruption mutant. In Escherichia coli (strain K12), this protein is Murein DD-endopeptidase MepH (mepH).